Here is a 98-residue protein sequence, read N- to C-terminus: MRPGRPLAGFYATLRRSFRRMSKRSKNKAKKERVPVEDRPPTPMPTSQRLIRRNALGGGVRPDAEDCIQRCHPLEPALGVSTKNFDLLSLRCELGWCG.

Positions 19-31 are enriched in basic residues; sequence RRMSKRSKNKAKK. The tract at residues 19–47 is disordered; sequence RRMSKRSKNKAKKERVPVEDRPPTPMPTS.

Belongs to the lymphocryptovirus BNLF2B family.

This is an uncharacterized protein from Epstein-Barr virus (strain AG876) (HHV-4).